The primary structure comprises 37 residues: Large ribosomal subunit protein bL36A (37 aa).

This sequence belongs to the bacterial ribosomal protein bL36 family.

The sequence is that of Large ribosomal subunit protein bL36A from Arthrobacter sp. (strain FB24).